Reading from the N-terminus, the 183-residue chain is Orotate phosphoribosyltransferase (183 aa).

5-phospho-alpha-D-ribose 1-diphosphate contacts are provided by residues Arg21, Lys88, and Glu112 to Ser120. Residues Thr116 and Arg144 each coordinate orotate.

This sequence belongs to the purine/pyrimidine phosphoribosyltransferase family. PyrE subfamily. Homodimer. It depends on Mg(2+) as a cofactor.

The enzyme catalyses orotidine 5'-phosphate + diphosphate = orotate + 5-phospho-alpha-D-ribose 1-diphosphate. Its pathway is pyrimidine metabolism; UMP biosynthesis via de novo pathway; UMP from orotate: step 1/2. Catalyzes the transfer of a ribosyl phosphate group from 5-phosphoribose 1-diphosphate to orotate, leading to the formation of orotidine monophosphate (OMP). This Thermus thermophilus (strain ATCC 27634 / DSM 579 / HB8) protein is Orotate phosphoribosyltransferase.